The sequence spans 61 residues: Bacteriocin leucocin-A (61 aa).

The propeptide occupies 1–24; it reads MMNMKPTESYEQLDNSALEQVVGG. An intrachain disulfide couples Cys33 to Cys38.

It belongs to the bacteriocin class IIA/YGNGV family.

The protein localises to the secreted. Its function is as follows. Inhibits a wide spectrum of lactic acid bacteria. In Leuconostoc gelidum, this protein is Bacteriocin leucocin-A (lcnA).